Here is a 414-residue protein sequence, read N- to C-terminus: Wilms tumor protein homolog A (414 aa).

Glycyl lysine isopeptide (Lys-Gly) (interchain with G-Cter in SUMO) cross-links involve residues Lys55 and Lys158. The 9aaTAD motif lies at 217 to 225; that stretch reads MTWNQMNLG. 3 consecutive C2H2-type zinc fingers follow at residues 288-312, 318-342, and 348-370; these read FMCA…SRKH, YQCD…QRRH, and FQCK…TRTH. Important for interaction with target DNA stretches follow at residues 332–346 and 358–366; these read SDQL…TGIK and SRSDHLKTH. Positions 373–375 match the KTS motif motif; sequence KTS. The C2H2-type 4 zinc finger occupies 379–403; it reads FSCRWPSCQKKFARSDELVRHHNMH.

It belongs to the EGR C2H2-type zinc-finger protein family. Expressed around the pronephric anlage and in the pronephros; expression is restricted to the splanchnic mesoderm (the site where the glomus forms) from tailbud stages, and the glomus of early tadpoles. Not expressed in the pronephric tubules or pronephric duct. In tadpoles (stage 38-39), additional expression begins in the heart. Also expressed in the adult kidney (mesonephros).

It localises to the nucleus. It is found in the cytoplasm. Its subcellular location is the nucleus speckle. Functionally, transcription factor required for development of the vascular component of the pronephric kidney, the glomus; may repress tubule-specific gene expression in the portion of the pronephros fated to form the glomus. Recognizes and binds to the DNA sequence 5'-GCG(T/G)GGGCG-3'. Inhibits Wnt-signaling during embryonic development. Function may be isoform-specific: the isoform containing the KTS motif is less effective in inhibiting wnt signaling. The protein is Wilms tumor protein homolog A (wt1-a) of Xenopus laevis (African clawed frog).